The sequence spans 263 residues: 3'-5' ssDNA/RNA exonuclease TatD (263 aa).

A divalent metal cation-binding residues include Glu-91, His-127, and His-152.

This sequence belongs to the metallo-dependent hydrolases superfamily. TatD-type hydrolase family. TatD subfamily. In terms of assembly, monomer. Mg(2+) serves as cofactor.

The protein resides in the cytoplasm. In terms of biological role, 3'-5' exonuclease that prefers single-stranded DNA and RNA. May play a role in the H(2)O(2)-induced DNA damage repair. This is 3'-5' ssDNA/RNA exonuclease TatD from Cronobacter sakazakii (strain ATCC BAA-894) (Enterobacter sakazakii).